A 426-amino-acid chain; its full sequence is Transcription factor bHLH60 (426 aa).

Composition is skewed to polar residues over residues 117 to 137 (QNGN…SSAN) and 148 to 172 (TDSS…QNNR). The tract at residues 117–201 (QNGNISGETP…SSEENEKLPY (85 aa)) is disordered. Residues 191 to 200 (KSSEENEKLP) are compositionally biased toward basic and acidic residues. The bHLH domain occupies 210–307 (QATDSHSLAE…DEIINHVQSL (98 aa)). The segment at 367–398 (HRQLQQPPTQQWPFDGLNQPVWGREEDQAHGN) is disordered.

As to quaternary structure, homodimer. In terms of tissue distribution, expressed constitutively in roots, leaves, stems, and flowers.

It localises to the nucleus. The protein is Transcription factor bHLH60 (BHLH60) of Arabidopsis thaliana (Mouse-ear cress).